The primary structure comprises 209 residues: Large ribosomal subunit protein uL3 (209 aa).

A disordered region spans residues Thr-113 to Lys-155.

This sequence belongs to the universal ribosomal protein uL3 family. In terms of assembly, part of the 50S ribosomal subunit. Forms a cluster with proteins L14 and L19.

One of the primary rRNA binding proteins, it binds directly near the 3'-end of the 23S rRNA, where it nucleates assembly of the 50S subunit. The chain is Large ribosomal subunit protein uL3 from Lactobacillus delbrueckii subsp. bulgaricus (strain ATCC 11842 / DSM 20081 / BCRC 10696 / JCM 1002 / NBRC 13953 / NCIMB 11778 / NCTC 12712 / WDCM 00102 / Lb 14).